The sequence spans 123 residues: MIQPQTLLNVADNSGARKLMCIRVIGAAGNQRYARIGDVIIAVIKDAVPQMPLERSEVIRAVIVRTRKEFKGDDGIIIRYDDNAAVIIDQKGNPKGTRVFGAVAEELRELNLTKIVSLAPEVL.

It belongs to the universal ribosomal protein uL14 family. In terms of assembly, part of the 50S ribosomal subunit. Interacts with IOJAP.

It localises to the plastid. The protein resides in the chloroplast. In terms of biological role, binds to 23S rRNA. This chain is Large ribosomal subunit protein uL14c, found in Zea mays (Maize).